Reading from the N-terminus, the 248-residue chain is NAD kinase (248 aa).

The active-site Proton acceptor is the aspartate 45. Residues 45–46, arginine 50, 110–111, and aspartate 138 contribute to the NAD(+) site; these read DG and NE.

Belongs to the NAD kinase family. The cofactor is a divalent metal cation.

It localises to the cytoplasm. It catalyses the reaction NAD(+) + ATP = ADP + NADP(+) + H(+). Involved in the regulation of the intracellular balance of NAD and NADP, and is a key enzyme in the biosynthesis of NADP. Catalyzes specifically the phosphorylation on 2'-hydroxyl of the adenosine moiety of NAD to yield NADP. This is NAD kinase from Sulfurisphaera tokodaii (strain DSM 16993 / JCM 10545 / NBRC 100140 / 7) (Sulfolobus tokodaii).